The sequence spans 238 residues: Uridylate kinase (238 aa).

ATP is bound at residue 12–15 (KLSG). Residue Gly-54 coordinates UMP. Gly-55 and Arg-59 together coordinate ATP. UMP is bound by residues Asp-74 and 135–142 (TGNPYFTT). 4 residues coordinate ATP: Thr-162, Asn-163, Tyr-168, and Asp-171.

Belongs to the UMP kinase family. Homohexamer.

The protein resides in the cytoplasm. It carries out the reaction UMP + ATP = UDP + ADP. It functions in the pathway pyrimidine metabolism; CTP biosynthesis via de novo pathway; UDP from UMP (UMPK route): step 1/1. Inhibited by UTP. Functionally, catalyzes the reversible phosphorylation of UMP to UDP. The sequence is that of Uridylate kinase from Nitrobacter hamburgensis (strain DSM 10229 / NCIMB 13809 / X14).